We begin with the raw amino-acid sequence, 158 residues long: MLYLTQRLETPAAATASVTLPIDVRVKSRVKVTLNDGREAGLLLPRGLLLRGGDVLSNEEGTEFVQVIAADEGVSVVRCDDPFMLAKACYHLGNRHVPLQIMPGELRYHHDHVLDDMLRQFGLTVTFGQLPFEPEAGAYASESHGHHHAHHAHHAHSH.

Belongs to the UreE family.

Its subcellular location is the cytoplasm. Its function is as follows. Involved in urease metallocenter assembly. Binds nickel. Probably functions as a nickel donor during metallocenter assembly. This Klebsiella pneumoniae (strain 342) protein is Urease accessory protein UreE.